We begin with the raw amino-acid sequence, 341 residues long: Phosphoribosylformylglycinamidine cyclo-ligase (341 aa).

The protein belongs to the AIR synthase family.

The protein resides in the cytoplasm. It carries out the reaction 2-formamido-N(1)-(5-O-phospho-beta-D-ribosyl)acetamidine + ATP = 5-amino-1-(5-phospho-beta-D-ribosyl)imidazole + ADP + phosphate + H(+). The protein operates within purine metabolism; IMP biosynthesis via de novo pathway; 5-amino-1-(5-phospho-D-ribosyl)imidazole from N(2)-formyl-N(1)-(5-phospho-D-ribosyl)glycinamide: step 2/2. This Agathobacter rectalis (strain ATCC 33656 / DSM 3377 / JCM 17463 / KCTC 5835 / VPI 0990) (Eubacterium rectale) protein is Phosphoribosylformylglycinamidine cyclo-ligase.